Here is a 308-residue protein sequence, read N- to C-terminus: General transcription factor IIH subunit 3 (308 aa).

The segment at 268–285 (CSVCLSIFCNFSPICTTC) adopts a C4-type zinc-finger fold.

It belongs to the TFB4 family. As to quaternary structure, part of a TFIID-containing RNA polymerase II pre-initiation complex that is composed of TBP and at least GTF2A1, GTF2A2, GTF2E1, GTF2E2, GTF2F1, GTF2H2, GTF2H3, GTF2H4, GTF2H5, GTF2B, TCEA1, ERCC2, ERCC3, TAF1, TAF2, TAF3, TAF4, TAF5, TAF6, TAF7, TAF8, TAF9, TAF10, TAF11, TAF12 and TAF13. Component of the 7-subunit TFIIH core complex composed of XPB/ERCC3, XPD/ERCC2, GTF2H1, GTF2H2, GTF2H3, GTF2H4 and GTF2H5, which is active in NER. The core complex associates with the 3-subunit CDK-activating kinase (CAK) module composed of CCNH/cyclin H, CDK7 and MNAT1 to form the 10-subunit holoenzyme (holo-TFIIH) active in transcription. Interacts with RARA; the interaction requires prior phosphorylation of RARA on 'Ser-369' which then enhances interaction of RARA with CDK7.

It is found in the nucleus. In terms of biological role, component of the general transcription and DNA repair factor IIH (TFIIH) core complex, which is involved in general and transcription-coupled nucleotide excision repair (NER) of damaged DNA and, when complexed to CAK, in RNA transcription by RNA polymerase II. In NER, TFIIH acts by opening DNA around the lesion to allow the excision of the damaged oligonucleotide and its replacement by a new DNA fragment. In transcription, TFIIH has an essential role in transcription initiation. When the pre-initiation complex (PIC) has been established, TFIIH is required for promoter opening and promoter escape. Phosphorylation of the C-terminal tail (CTD) of the largest subunit of RNA polymerase II by the kinase module CAK controls the initiation of transcription. This Homo sapiens (Human) protein is General transcription factor IIH subunit 3 (GTF2H3).